A 193-amino-acid chain; its full sequence is E3 ubiquitin-protein ligase RMA2 (193 aa).

The RING-type zinc finger occupies 21–75; it reads CNICLDQVRDPVVTLCGHLFCWPCIHKWTYASNNSRQRVDQYDHKREPPKCPVCK. Residues 175-192 traverse the membrane as a helical; Anchor for type IV membrane protein segment; sequence LSRVYLFLLCFMFMCLFL.

As to quaternary structure, interacts with ERABP1. In terms of tissue distribution, barely detected in roots and limited to the root tips. Expressed in leaf hydathodes and in siliques.

The protein resides in the endoplasmic reticulum membrane. The catalysed reaction is S-ubiquitinyl-[E2 ubiquitin-conjugating enzyme]-L-cysteine + [acceptor protein]-L-lysine = [E2 ubiquitin-conjugating enzyme]-L-cysteine + N(6)-ubiquitinyl-[acceptor protein]-L-lysine.. It functions in the pathway protein modification; protein ubiquitination. Its function is as follows. E3 ubiquitin-protein ligase that promotes the ubiquitination and proteasomal degradation of the auxin-binding protein ERABP1. The chain is E3 ubiquitin-protein ligase RMA2 (RMA2) from Arabidopsis thaliana (Mouse-ear cress).